Here is a 156-residue protein sequence, read N- to C-terminus: Small ribosomal subunit protein uS7 (156 aa).

It belongs to the universal ribosomal protein uS7 family. Part of the 30S ribosomal subunit. Contacts proteins S9 and S11.

In terms of biological role, one of the primary rRNA binding proteins, it binds directly to 16S rRNA where it nucleates assembly of the head domain of the 30S subunit. Is located at the subunit interface close to the decoding center, probably blocks exit of the E-site tRNA. The polypeptide is Small ribosomal subunit protein uS7 (Rippkaea orientalis (strain PCC 8801 / RF-1) (Cyanothece sp. (strain PCC 8801))).